The chain runs to 219 residues: 2,5-diamino-6-ribosylamino-4(3H)-pyrimidinone 5'-phosphate reductase (219 aa).

Residues threonine 52, aspartate 56, 87-90, valine 134, and 156-159 contribute to the NADP(+) site; these read SRCR and GGTL.

Belongs to the HTP reductase family. Homodimer.

The catalysed reaction is 2,5-diamino-6-(1-D-ribitylamino)pyrimidin-4(3H)-one 5'-phosphate + NADP(+) = 2,5-diamino-6-(1-D-ribosylamino)pyrimidin-4(3H)-one 5'-phosphate + NADPH + H(+). The enzyme catalyses 2,5-diamino-6-(1-D-ribitylamino)pyrimidin-4(3H)-one 5'-phosphate + NAD(+) = 2,5-diamino-6-(1-D-ribosylamino)pyrimidin-4(3H)-one 5'-phosphate + NADH + H(+). It functions in the pathway cofactor biosynthesis; riboflavin biosynthesis. In terms of biological role, catalyzes an early step in riboflavin biosynthesis, the NADPH-dependent reduction of the ribose side chain of 2,5-diamino-6-ribosylamino-4(3H)-pyrimidinone 5'-phosphate, yielding 2,5-diamino-6-ribitylamino-4(3H)-pyrimidinone 5'-phosphate. The sequence is that of 2,5-diamino-6-ribosylamino-4(3H)-pyrimidinone 5'-phosphate reductase from Archaeoglobus fulgidus (strain ATCC 49558 / DSM 4304 / JCM 9628 / NBRC 100126 / VC-16).